The sequence spans 530 residues: UDP-glucuronosyltransferase 1A9 (530 aa).

The first 25 residues, Met1–Ala25, serve as a signal peptide directing secretion. Residue Asn71 is glycosylated (N-linked (GlcNAc...) asparagine). Lys99 is modified (N6-succinyllysine). N-linked (GlcNAc...) asparagine glycosylation is found at Asn292 and Asn344. A helical transmembrane segment spans residues Val488–Phe504.

This sequence belongs to the UDP-glycosyltransferase family. Homodimer. Homooligomer. Interacts with UGT1A1, UGT1A3, UGT1A4, UGT1A6, UGT1A7, UGT1A8 and UGT1A10 to form heterodimers. Isoform 1 interacts with isoform 2/i2 suggesting that oligomerization is involved in negative regulation of transferase activity by isoform 2. Isoform 1 also interacts with respective i2 isoforms of UGT1A1, UGT1A3, UGT1A4, UGT1A6, UGT1A7, UGT1A8 and UGT1A10. In terms of tissue distribution, expressed in liver, kidney, colon, esophagus and small intestine.

The protein resides in the endoplasmic reticulum membrane. It carries out the reaction glucuronate acceptor + UDP-alpha-D-glucuronate = acceptor beta-D-glucuronoside + UDP + H(+). It catalyses the reaction 2-hydroxy-17beta-estradiol + UDP-alpha-D-glucuronate = 2-hydroxy-17beta-estradiol 3-O-(beta-D-glucuronate) + UDP + H(+). The enzyme catalyses 4-hydroxy-17beta-estradiol + UDP-alpha-D-glucuronate = 17beta-estradiol 4-O-(beta-D-glucuronate) + UDP + H(+). The catalysed reaction is 2-hydroxyestrone + UDP-alpha-D-glucuronate = 2-hydroxyestrone 3-O-(beta-D-glucuronate) + UDP + H(+). It carries out the reaction 4-hydroxyestrone + UDP-alpha-D-glucuronate = estrone 4-O-(beta-D-glucuronate) + UDP + H(+). It catalyses the reaction prunetin + UDP-alpha-D-glucuronate = prunetin-5-O-beta-D-glucuronide + UDP. The enzyme catalyses 8-iso-prostaglandin F2alpha + UDP-alpha-D-glucuronate = 8-iso-prostaglandin F2alpha-glucuronide + UDP + H(+). The catalysed reaction is 5-epi-5-F2t-IsoP + UDP-alpha-D-glucuronate = 5-epi-5-F2t-IsoP-glucuronide + UDP + H(+). It carries out the reaction (5Z,8Z,11Z,14Z)-eicosatetraenoate + UDP-alpha-D-glucuronate = O-[(5Z),(8Z),(11Z),(14Z)-eicosatetraenoyl]-beta-D-glucuronate + UDP. It catalyses the reaction 15-hydroxy-(5Z,8Z,11Z,13E)-eicosatetraenoate + UDP-alpha-D-glucuronate = 15-O-(beta-D-glucuronosyl)-(5Z,8Z,11Z,14Z)-eicosatetraenoate + UDP + H(+). The enzyme catalyses prostaglandin B1 + UDP-alpha-D-glucuronate = 15-O-(beta-D-glucuronosyl)-prostaglandin B1 + UDP + H(+). The catalysed reaction is (E)-ferulate + UDP-alpha-D-glucuronate = (E)-4-O-(beta-D-glucuronosyl)-ferulate + UDP + H(+). It carries out the reaction (E)-ferulate + UDP-alpha-D-glucuronate = (E)-ferulic acid beta-D-glucuronate ester + UDP. It catalyses the reaction candesartan + UDP-alpha-D-glucuronate = candesartan O-beta-D-glucuronoside + UDP. The enzyme catalyses SN-38 + UDP-alpha-D-glucuronate = SN-38 O-beta-D-glucuronide + UDP + H(+). The catalysed reaction is mycophenolate + UDP-alpha-D-glucuronate = mycophenolate 7-O-beta-D-glucuronide + UDP + H(+). In terms of biological role, UDP-glucuronosyltransferase (UGT) that catalyzes phase II biotransformation reactions in which lipophilic substrates are conjugated with glucuronic acid to increase the metabolite's water solubility, thereby facilitating excretion into either the urine or bile. Essential for the elimination and detoxification of drugs, xenobiotics and endogenous compounds. Catalyzes the glucuronidation of endogenous estrogen hormones such as estradiol and estrone. Involved in the glucuronidation of arachidonic acid (AA) and AA-derived eicosanoids including 15-HETE, PGB1 and F2-isoprostanes (8-iso-PGF2alpha and 5-epi-5-F2t-IsoP). Glucuronates the phytochemical ferulic acid efficently at both the phenolic or the carboxylic acid group. Also catalyzes the glucuronidation of the isoflavones genistein, daidzein, glycitein, formononetin, biochanin A and prunetin, which are phytoestrogens with anticancer and cardiovascular properties. Involved in the glucuronidation of the AGTR1 angiotensin receptor antagonist caderastan, a drug which can inhibit the effect of angiotensin II. Involved in the biotransformation of 7-ethyl-10-hydroxycamptothecin (SN-38), the pharmacologically active metabolite of the anticancer drug irinotecan. Also metabolizes mycophenolate, an immunosuppressive agent. Functionally, lacks UGT glucuronidation activity but acts as a negative regulator of isoform 1. The sequence is that of UDP-glucuronosyltransferase 1A9 from Homo sapiens (Human).